Reading from the N-terminus, the 474-residue chain is uncharacterized protein (474 aa).

The span at 1–14 (MGSRYPSHQLSNGL) shows a compositional bias: polar residues. The segment at 1 to 137 (MGSRYPSHQL…QSGGVTRQNS (137 aa)) is disordered. Phosphoserine is present on S45. Composition is skewed to polar residues over residues 73-83 (RSGSFAGTAQS), 97-113 (SLAS…NSGP), and 125-137 (SGPQ…RQNS). S169 carries the post-translational modification Phosphoserine. Helical transmembrane passes span 210–230 (VLWL…FILG) and 236–256 (ILLV…IWNI).

It localises to the membrane. This is an uncharacterized protein from Arabidopsis thaliana (Mouse-ear cress).